The chain runs to 584 residues: Endoribonuclease YBEY, chloroplastic (584 aa).

A chloroplast-targeting transit peptide spans 1–50 (MLSRVCPTLRYNRIWSAHAREMPRATLLLLQPNFFHSSPKTALVNRLDVT). Residues histidine 240, histidine 244, and histidine 250 each contribute to the Zn(2+) site.

It belongs to the endoribonuclease YbeY family. Zn(2+) serves as cofactor.

It is found in the plastid. It localises to the chloroplast stroma. Endoribonuclease required for chloroplast ribosomal RNA (rRNA) processing and essential for normal growth and development. May be involved in maturation of both the 5' and 3' ends of 16S, 23S, and 4.5S rRNAs. Cleaves chloroplast rRNAs, mRNAs and tRNAs in vitro. This Arabidopsis thaliana (Mouse-ear cress) protein is Endoribonuclease YBEY, chloroplastic.